A 125-amino-acid chain; its full sequence is Apolipoprotein C-IV (125 aa).

An N-terminal signal peptide occupies residues 1-27 (MSLLRQRLQALPVLCLCVLVLACIGAC).

This sequence belongs to the apolipoprotein C4 family.

It localises to the secreted. Functionally, may participate in lipoprotein metabolism. The protein is Apolipoprotein C-IV (APOC4) of Plecturocebus moloch (Dusky titi monkey).